Consider the following 338-residue polypeptide: tRNA pseudouridine synthase D (338 aa).

Asp-79 acts as the Nucleophile in catalysis. The TRUD domain maps to 154–303 (GVPNYFGEQR…EEAWRANILY (150 aa)).

It belongs to the pseudouridine synthase TruD family.

It carries out the reaction uridine(13) in tRNA = pseudouridine(13) in tRNA. Functionally, responsible for synthesis of pseudouridine from uracil-13 in transfer RNAs. This Legionella pneumophila (strain Lens) protein is tRNA pseudouridine synthase D.